The following is a 1755-amino-acid chain: Gag-Pro-Pol polyprotein (1755 aa).

Gly-2 is lipidated: N-myristoyl glycine; by host. Composition is skewed to basic and acidic residues over residues 151 to 169 and 178 to 191; these read YDEP…EKDH and QRKE…KEKD. A disordered region spans residues 151–191; it reads YDEPYEEKEKADKNEEKDHVRKIKKVVQRKENSEGKRKEKD. Residues 305–308 carry the PTAP/PSAP motif motif; that stretch reads PSAP. 2 CCHC-type zinc fingers span residues 525–542 and 552–569; these read PVCF…DCKD and GLCP…ECKS. The interval 572 to 631 is disordered; that stretch reads DKDGNPLPPLETNAENSKNLVKGQSPSPAQKGDGVKGSGLNPEAPPFTIHDLPRGTPGSA. Positions 584–599 are enriched in polar residues; that stretch reads NAENSKNLVKGQSPSP. Positions 766–841 constitute a Peptidase A2 domain; that stretch reads FLGLLDTGAD…LPFTLWGRDI (76 aa). Asp-771 functions as the Protease; shared with dimeric partner in the catalytic mechanism. In terms of domain architecture, Reverse transcriptase spans 905-1093; sequence LQLGHLEESN…DNLKYLGTHI (189 aa). The Mg(2+) site is built by Asp-970, Asp-1045, Asp-1046, Asp-1316, Glu-1346, Asp-1366, and Asp-1429. An RNase H type-1 domain is found at 1307–1437; the sequence is LEKGIVIFTD…ADSLTRILTA (131 aa). Residues 1436–1477 form an Integrase-type zinc finger; sequence TALESAQESHALHHQNAAALRFQFHITREQAREIVKLCPNCP. Zn(2+) contacts are provided by His-1445, His-1449, Cys-1473, and Cys-1476. Positions 1490–1647 constitute an Integrase catalytic domain; it reads RGLKPRVLWQ…TAAERHWGPI (158 aa). Mg(2+) is bound by residues Asp-1501, Asp-1558, and Glu-1594. Positions 1653–1702 form a DNA-binding region, integrase-type; that stretch reads PMVMWKDLLTGSWKGPDVLITAGRGYACVFPQDAETPIWVPDRFIRPFTE. Residues 1699–1755 are disordered; it reads PFTERKEATPTPGTAEKTPPRDEKDQQESPKNESSPHQREDGLATSAGVDLRSGGGP. Residues 1716–1740 show a composition bias toward basic and acidic residues; sequence TPPRDEKDQQESPKNESSPHQREDG.

The protein belongs to the retroviral Pol polyprotein family. Homodimer; when myristoylated. As to quaternary structure, homodimer. In terms of assembly, homooctamer. Homotrimer. Mg(2+) serves as cofactor. Post-translationally, specific enzymatic cleavages in vivo yield mature proteins. Released by autocatalytic processing. In terms of processing, myristoylated. Myristoylation of the matrix (MA) domain mediates the transport and binding of Gag polyproteins to the host plasma membrane and is required for the assembly of viral particles.

The protein localises to the virion. The enzyme catalyses DNA(n) + a 2'-deoxyribonucleoside 5'-triphosphate = DNA(n+1) + diphosphate. It catalyses the reaction Endonucleolytic cleavage to 5'-phosphomonoester.. The catalysed reaction is dUTP + H2O = dUMP + diphosphate + H(+). Inhibited by pepstatin A. In terms of biological role, matrix protein. Functionally, nucleocapsid protein p14: Binds strongly to viral nucleic acids and promote their aggregation. Also destabilizes the nucleic acids duplexes via highly structured zinc-binding motifs. Capsid protein. Its function is as follows. NC-dUTPase has dUTPase activity, thereby preventing incorporation of uracil into DNA. In terms of biological role, the aspartyl protease mediates proteolytic cleavages of Gag and Gag-Pol polyproteins during or shortly after the release of the virion from the plasma membrane. Cleavages take place as an ordered, step-wise cascade to yield mature proteins. This process is called maturation. Displays maximal activity during the budding process just prior to particle release from the cell. Functionally, RT is a multifunctional enzyme that converts the viral dimeric RNA genome into dsDNA in the cytoplasm, shortly after virus entry into the cell. This enzyme displays a DNA polymerase activity that can copy either DNA or RNA templates, and a ribonuclease H (RNase H) activity that cleaves the RNA strand of RNA-DNA heteroduplexes in a partially processive 3' to 5' endonucleasic mode. Conversion of viral genomic RNA into dsDNA requires many steps. A tRNA binds to the primer-binding site (PBS) situated at the 5' end of the viral RNA. RT uses the 3' end of the tRNA primer to perfom a short round of RNA-dependent minus-strand DNA synthesis. The reading proceeds through the U5 region and ends after the repeated (R) region which is present at both ends of viral RNA. The portion of the RNA-DNA heteroduplex is digested by the RNase H, resulting in a ssDNA product attached to the tRNA primer. This ssDNA/tRNA hybridizes with the identical R region situated at the 3' end of viral RNA. This template exchange, known as minus-strand DNA strong stop transfer, can be either intra- or intermolecular. RT uses the 3' end of this newly synthesized short ssDNA to perfom the RNA-dependent minus-strand DNA synthesis of the whole template. RNase H digests the RNA template except for a polypurine tract (PPT) situated at the 5' end of the genome. It is not clear if both polymerase and RNase H activities are simultaneous. RNase H probably can proceed both in a polymerase-dependent (RNA cut into small fragments by the same RT performing DNA synthesis) and a polymerase-independent mode (cleavage of remaining RNA fragments by free RTs). Secondly, RT performs DNA-directed plus-strand DNA synthesis using the PPT that has not been removed by RNase H as primers. PPT and tRNA primers are then removed by RNase H. The 3' and 5' ssDNA PBS regions hybridize to form a circular dsDNA intermediate. Strand displacement synthesis by RT to the PBS and PPT ends produces a blunt ended, linear dsDNA copy of the viral genome that includes long terminal repeats (LTRs) at both ends. Catalyzes viral DNA integration into the host chromosome, by performing a series of DNA cutting and joining reactions. This Mus musculus (Mouse) protein is Gag-Pro-Pol polyprotein (gag-pro-pol).